A 373-amino-acid chain; its full sequence is Dual-specificity RNA methyltransferase RlmN (373 aa).

Glu101 acts as the Proton acceptor in catalysis. The Radical SAM core domain maps to 107–350 (ENKRTTLCVS…TIIRKIRGAD (244 aa)). Cys114 and Cys355 are oxidised to a cystine. The [4Fe-4S] cluster site is built by Cys121, Cys125, and Cys128. S-adenosyl-L-methionine is bound by residues 179–180 (GE), Ser211, 233–235 (SLH), and Asn312. Cys355 acts as the S-methylcysteine intermediate in catalysis.

This sequence belongs to the radical SAM superfamily. RlmN family. [4Fe-4S] cluster serves as cofactor.

It localises to the cytoplasm. It carries out the reaction adenosine(2503) in 23S rRNA + 2 reduced [2Fe-2S]-[ferredoxin] + 2 S-adenosyl-L-methionine = 2-methyladenosine(2503) in 23S rRNA + 5'-deoxyadenosine + L-methionine + 2 oxidized [2Fe-2S]-[ferredoxin] + S-adenosyl-L-homocysteine. The enzyme catalyses adenosine(37) in tRNA + 2 reduced [2Fe-2S]-[ferredoxin] + 2 S-adenosyl-L-methionine = 2-methyladenosine(37) in tRNA + 5'-deoxyadenosine + L-methionine + 2 oxidized [2Fe-2S]-[ferredoxin] + S-adenosyl-L-homocysteine. Functionally, specifically methylates position 2 of adenine 2503 in 23S rRNA and position 2 of adenine 37 in tRNAs. m2A2503 modification seems to play a crucial role in the proofreading step occurring at the peptidyl transferase center and thus would serve to optimize ribosomal fidelity. This chain is Dual-specificity RNA methyltransferase RlmN, found in Blochmanniella pennsylvanica (strain BPEN).